Consider the following 326-residue polypeptide: Putative ubiquitin-conjugating enzyme E2 38 (326 aa).

Residues 54 to 214 (NWVKKVQDEW…VFLLSLKTMV (161 aa)) enclose the UBC core domain. The Glycyl thioester intermediate role is filled by Cys140. Residues 297 to 326 (LAEKPKPPVNNANTENQSKKKTRKRSRSSR) are disordered. A compositionally biased stretch (basic residues) spans 315–326 (KKKTRKRSRSSR).

Belongs to the ubiquitin-conjugating enzyme family.

It catalyses the reaction S-ubiquitinyl-[E1 ubiquitin-activating enzyme]-L-cysteine + [E2 ubiquitin-conjugating enzyme]-L-cysteine = [E1 ubiquitin-activating enzyme]-L-cysteine + S-ubiquitinyl-[E2 ubiquitin-conjugating enzyme]-L-cysteine.. It functions in the pathway protein modification; protein ubiquitination. Its function is as follows. Accepts the ubiquitin from the E1 complex and catalyzes its covalent attachment to other proteins. The sequence is that of Putative ubiquitin-conjugating enzyme E2 38 (UBC38) from Arabidopsis thaliana (Mouse-ear cress).